The primary structure comprises 939 residues: MSNDPSAVSELPDKDSLDNGISNDNERAMGGNGDGGDGLRLPRTTGTLNVNALQKGTNAAHEAGGYKSMDPAKNAETTNDDDNNVVSLDDPIQFTRVSSSSVISGMSSSMSPHSNIDETKSLEAVTPNINTSNITPDHSADNTFSTINASESDHQFNDTLLSKLSLTDSTETIENNATVKHQQPVASSTVNSNKSSTDIRRATPVSTPVISKPSMTTTPRQINSASHSLSNPKHKQHKPKVKPSKPEAKSKPVSVKKSFPSKNPLKNSSPPKKQTEKSYYSSSSKKRKSGSNSGTLRMKDVFTSFVQNIKRNSQDDKRASSSSNNSSSSSITTALRISTPYNAKHIHHVGVDSKTGEYTGLPEEWEKLLTSSGISKREQQQNMQAVMDIVKFYQDVTETNGEDKMFKTFNTTTGLPGSPQVSTPPANSFNKFPPSTSDSHNYGSRTGTPMSNHVMSPTLNTDSSSANGKFIPSRPAPKPPSSASASAPIIKSPVMNSAANVSPLKQTHAPTTPNRTSPNRSSISRNATLKKEEQPLPPIPPTKSKTSPIISTAHTPQQVAQSPKAPAQETVTTPTSKPAQARSLSKELNEKKREERERRKKQLYAKLNEICSDGDPSTKYANLVKIGQGASGGVYTAYEIGTNVSVAIKQMNLEKQPKKELIINEILVMKGSKHPNIVNFIDSYVLKGDLWVIMEYMEGGSLTDVVTHCILTEGQIGAVCRETLSGLEFLHSKGVLHRDIKSDNILLSMEGDIKLTDFGFCAQINELNLKRTTMVGTPYWMAPEVVSRKEYGPKVDIWSLGIMIIEMIEGEPPYLNETPLRALYLIATNGTPKLKEPENLSSSLKKFLDWCLCVEPEDRASATELLHDEYITEIAEANSSLAPLVKLARLKKVAENMDADEDNDDDNDNEHINKTNNCDDNNDSKETVNLDVTEDDKQK.

Residues 1–87 (MSNDPSAVSE…TNDDDNNVVS (87 aa)) form a disordered region. N-acetylserine is present on Ser-2. Polar residues predominate over residues 44–57 (TTGTLNVNALQKGT). Phosphoserine is present on residues Ser-87 and Ser-165. Thr-167 is modified (phosphothreonine). Ser-169 carries the phosphoserine modification. Polar residues predominate over residues 176–196 (NATVKHQQPVASSTVNSNKSS). 2 disordered regions span residues 176–299 (NATV…LRMK) and 311–331 (RNSQDDKRASSSSNNSSSSSI). A Phosphothreonine modification is found at Thr-203. Residues 204 to 231 (PVSTPVISKPSMTTTPRQINSASHSLSN) are compositionally biased toward polar residues. Residues 232 to 243 (PKHKQHKPKVKP) are compositionally biased toward basic residues. Low complexity-rich tracts occupy residues 251-283 (KPVSVKKSFPSKNPLKNSSPPKKQTEKSYYSSS) and 320-330 (SSSSNNSSSSS). Residues 337–350 (ISTPYNAKHIHHVG) enclose the CRIB domain. Disordered stretches follow at residues 407–487 (KTFN…SASA) and 500–598 (NVSP…ERER). Composition is skewed to polar residues over residues 408–467 (TFNT…SSAN) and 500–527 (NVSPLKQTHAPTTPNRTSPNRSSISRNA). The residue at position 418 (Ser-418) is a Phosphoserine. A BEM1-binding region spans residues 434-499 (PSTSDSHNYG…IKSPVMNSAA (66 aa)). Residues Ser-502, Ser-547, and Ser-562 each carry the phosphoserine modification. The segment covering 542 to 552 (TKSKTSPIIST) has biased composition (low complexity). Over residues 569–578 (ETVTTPTSKP) the composition is skewed to polar residues. Thr-573 bears the Phosphothreonine mark. Residues 584–597 (LSKELNEKKREERE) show a composition bias toward basic and acidic residues. Ser-585 bears the Phosphoserine mark. The Protein kinase domain maps to 620–871 (YANLVKIGQG…ATELLHDEYI (252 aa)). ATP is bound by residues 626-634 (IGQGASGGV) and Lys-649. Asp-739 functions as the Proton acceptor in the catalytic mechanism. Thr-773 is modified (phosphothreonine). Residues 899-908 (ADEDNDDDND) are compositionally biased toward acidic residues. A disordered region spans residues 899–939 (ADEDNDDDNDNEHINKTNNCDDNNDSKETVNLDVTEDDKQK). Residue Ser-924 is modified to Phosphoserine. At Thr-927 the chain carries Phosphothreonine.

It belongs to the protein kinase superfamily. STE Ser/Thr protein kinase family. STE20 subfamily. As to quaternary structure, interacts with BEM1, CDC42, CLN2, STE4 and the 14-3-3 proteins BMH1 and BMH2. Autophosphorylated and phosphorylated by the CLN2-CDC28 complex in a cell cycle dependent manner. Post-translationally, autophosphorylated on serine residues.

Its subcellular location is the cytoplasm. The protein resides in the nucleus. The enzyme catalyses L-seryl-[protein] + ATP = O-phospho-L-seryl-[protein] + ADP + H(+). It catalyses the reaction L-threonyl-[protein] + ATP = O-phospho-L-threonyl-[protein] + ADP + H(+). In terms of biological role, MAP4K component of the MAPK pathway required for the mating pheromone response, haploid invasive growth and diploid pseudohyphal development. Links the pheromone response G-protein beta gamma subunits to downstream signaling components. Needed for mating in haploid cells, induction of a mating-specific gene FUS1, induction of mating-specific morphologies, and pheromone-induced proliferation arrest. Required for the regulation of the actin polarization and bud emergence during cell cycle in G1. Involved in the high osmolarity glycerol (HOG) response. Phosphorylates 'Thr-307' and 'Ser-302' or 'Ser-306' of STE11 and 'Ser-357' of MYO3. Phosphorylates histone H2B to form H2BS10ph during meiosis and H(2)O(2)-induced apoptosis. Its interaction with CDC42 is required for both invasive growth and the formation of pseudohyphae. Its interaction with STE4 is required for the pheromone signaling. This Saccharomyces cerevisiae (strain ATCC 204508 / S288c) (Baker's yeast) protein is Serine/threonine-protein kinase STE20 (STE20).